The chain runs to 474 residues: L-arabinose isomerase (474 aa).

Residues Glu-306, Glu-331, His-348, and His-447 each contribute to the Mn(2+) site.

Belongs to the arabinose isomerase family. Mn(2+) is required as a cofactor.

The catalysed reaction is beta-L-arabinopyranose = L-ribulose. It functions in the pathway carbohydrate degradation; L-arabinose degradation via L-ribulose; D-xylulose 5-phosphate from L-arabinose (bacterial route): step 1/3. In terms of biological role, catalyzes the conversion of L-arabinose to L-ribulose. The polypeptide is L-arabinose isomerase (Levilactobacillus brevis (strain ATCC 367 / BCRC 12310 / CIP 105137 / JCM 1170 / LMG 11437 / NCIMB 947 / NCTC 947) (Lactobacillus brevis)).